Consider the following 302-residue polypeptide: Nucleotide-binding protein Strop_3101 (302 aa).

26–33 (GVSGGGRS) contacts ATP. A GTP-binding site is contributed by 77 to 80 (DVRS).

It belongs to the RapZ-like family.

Displays ATPase and GTPase activities. This Salinispora tropica (strain ATCC BAA-916 / DSM 44818 / JCM 13857 / NBRC 105044 / CNB-440) protein is Nucleotide-binding protein Strop_3101.